Here is a 284-residue protein sequence, read N- to C-terminus: Efem/EfeO family lipoprotein (284 aa).

The N-terminal stretch at 1-17 (MKKLTTLLLASTLLIAA) is a signal peptide. Residue Cys-18 is the site of N-palmitoyl cysteine attachment. Cys-18 carries S-diacylglycerol cysteine lipidation.

It belongs to the EfeM/EfeO family.

Its subcellular location is the cell membrane. This Staphylococcus aureus (strain USA300) protein is Efem/EfeO family lipoprotein.